The following is a 37-amino-acid chain: MKVRPSVKKICPKCKVIRRKGVLRVICDNPRHKQRQG.

Belongs to the bacterial ribosomal protein bL36 family.

The sequence is that of Large ribosomal subunit protein bL36 from Maridesulfovibrio salexigens (strain ATCC 14822 / DSM 2638 / NCIMB 8403 / VKM B-1763) (Desulfovibrio salexigens).